Reading from the N-terminus, the 402-residue chain is Digeranylgeranylglycerophospholipid reductase (402 aa).

The FAD site is built by G15, E34, C45, A46, G48, R99, A123, D280, G292, and I293.

The protein belongs to the geranylgeranyl reductase family. DGGGPL reductase subfamily. FAD serves as cofactor.

The catalysed reaction is a 2,3-bis-O-phytanyl-sn-glycerol 1-phospholipid + 8 oxidized 2[4Fe-4S]-[ferredoxin] = a 2,3-bis-O-(geranylgeranyl)-sn-glycerol 1-phospholipid + 8 reduced 2[4Fe-4S]-[ferredoxin] + 16 H(+). It catalyses the reaction 2,3-bis-O-(phytanyl)-sn-glycerol 1-phosphate + 8 oxidized 2[4Fe-4S]-[ferredoxin] = 2,3-bis-O-(geranylgeranyl)-sn-glycerol 1-phosphate + 8 reduced 2[4Fe-4S]-[ferredoxin] + 16 H(+). It carries out the reaction a 2,3-bis-O-phytanyl-sn-glycerol 1-phospholipid + 8 A = a 2,3-bis-O-(geranylgeranyl)-sn-glycerol 1-phospholipid + 8 AH2. The enzyme catalyses CDP-2,3-bis-O-(geranylgeranyl)-sn-glycerol + 8 AH2 = CDP-2,3-bis-O-(phytanyl)-sn-glycerol + 8 A. The catalysed reaction is archaetidylserine + 8 AH2 = 2,3-bis-O-phytanyl-sn-glycero-3-phospho-L-serine + 8 A. It functions in the pathway membrane lipid metabolism; glycerophospholipid metabolism. In terms of biological role, is involved in the reduction of 2,3-digeranylgeranylglycerophospholipids (unsaturated archaeols) into 2,3-diphytanylglycerophospholipids (saturated archaeols) in the biosynthesis of archaeal membrane lipids. Catalyzes the formation of archaetidic acid (2,3-di-O-phytanyl-sn-glyceryl phosphate) from 2,3-di-O-geranylgeranylglyceryl phosphate (DGGGP) via the hydrogenation of each double bond of the isoprenoid chains. Is also probably able to reduce double bonds of geranyl groups in CDP-2,3-bis-O-(geranylgeranyl)-sn-glycerol and archaetidylserine, thus acting at various stages in the biosynthesis of archaeal membrane lipids. The chain is Digeranylgeranylglycerophospholipid reductase from Methanospirillum hungatei JF-1 (strain ATCC 27890 / DSM 864 / NBRC 100397 / JF-1).